The primary structure comprises 208 residues: Uridine kinase (208 aa).

Gly-12–Thr-19 contributes to the ATP binding site.

Belongs to the uridine kinase family.

The protein resides in the cytoplasm. The catalysed reaction is uridine + ATP = UMP + ADP + H(+). It carries out the reaction cytidine + ATP = CMP + ADP + H(+). The protein operates within pyrimidine metabolism; CTP biosynthesis via salvage pathway; CTP from cytidine: step 1/3. It functions in the pathway pyrimidine metabolism; UMP biosynthesis via salvage pathway; UMP from uridine: step 1/1. In Streptococcus pyogenes serotype M18 (strain MGAS8232), this protein is Uridine kinase.